We begin with the raw amino-acid sequence, 100 residues long: Urease subunit gamma (100 aa).

This sequence belongs to the urease gamma subunit family. In terms of assembly, heterotrimer of UreA (gamma), UreB (beta) and UreC (alpha) subunits. Three heterotrimers associate to form the active enzyme.

It is found in the cytoplasm. It catalyses the reaction urea + 2 H2O + H(+) = hydrogencarbonate + 2 NH4(+). It functions in the pathway nitrogen metabolism; urea degradation; CO(2) and NH(3) from urea (urease route): step 1/1. The protein is Urease subunit gamma of Rhizobium leguminosarum bv. viciae.